Consider the following 446-residue polypeptide: tRNA(Ile2) 2-agmatinylcytidine synthetase TiaS (446 aa).

Belongs to the TiaS family.

It localises to the cytoplasm. It catalyses the reaction cytidine(34) in tRNA(Ile2) + agmatine + ATP + H2O = 2-agmatinylcytidine(34) in tRNA(Ile2) + AMP + 2 phosphate + 2 H(+). Its function is as follows. ATP-dependent agmatine transferase that catalyzes the formation of 2-agmatinylcytidine (agm2C) at the wobble position (C34) of tRNA(Ile2), converting the codon specificity from AUG to AUA. This chain is tRNA(Ile2) 2-agmatinylcytidine synthetase TiaS, found in Cenarchaeum symbiosum (strain A).